We begin with the raw amino-acid sequence, 883 residues long: Serine/threonine-protein phosphatase BSL1 homolog (883 aa).

Kelch repeat units lie at residues 64–113 (ASSG…AVGT), 221–271 (MLLL…VFVG), 273–323 (RLHV…DHDA), and 341–387 (QIYI…NRNH). Disordered regions lie at residues 381-402 (ENQNRNHNFNSDSPTTNNSTDK), 430-466 (SHASSEDSLSEGIGSESPLSETSPMPEDLDDGGSLEP), and 499-525 (NESRRMHPSSNDQSYPAKKALNRQRSP). Residues 385-399 (RNHNFNSDSPTTNNS) show a composition bias toward polar residues. Residues Asp-586, His-588, Asp-620, and Asn-652 each contribute to the Mn(2+) site. His-653 acts as the Proton donor in catalysis. Mn(2+) is bound by residues His-705 and His-784. Residues 861–883 (QRPPTPTRGRPQSASDRNSLAYI) form a disordered region. The span at 872-883 (QSASDRNSLAYI) shows a compositional bias: polar residues.

It belongs to the PPP phosphatase family. BSU subfamily. In terms of assembly, interacts with the phosphorylated form of BSK3. Mn(2+) serves as cofactor.

The protein resides in the nucleus. It carries out the reaction O-phospho-L-seryl-[protein] + H2O = L-seryl-[protein] + phosphate. The catalysed reaction is O-phospho-L-threonyl-[protein] + H2O = L-threonyl-[protein] + phosphate. The protein is Serine/threonine-protein phosphatase BSL1 homolog (BSL1) of Oryza sativa subsp. japonica (Rice).